A 144-amino-acid polypeptide reads, in one-letter code: Large ribosomal subunit protein uL11m (144 aa).

A mitochondrion-targeting transit peptide spans 1-32; sequence MASTRTTIIKLIVPAGKATPTPPIGPALGARG.

This sequence belongs to the universal ribosomal protein uL11 family. As to quaternary structure, component of the mitochondrial large ribosomal subunit (mt-LSU). Mature yeast 74S mitochondrial ribosomes consist of a small (37S) and a large (54S) subunit. The 37S small subunit contains a 15S ribosomal RNA (15S mt-rRNA) and at least 32 different proteins. The 54S large subunit contains a 21S rRNA (21S mt-rRNA) and at least 45 different proteins.

Its subcellular location is the mitochondrion. It is found in the cytoplasm. Its function is as follows. Component of the mitochondrial ribosome (mitoribosome), a dedicated translation machinery responsible for the synthesis of mitochondrial genome-encoded proteins, including at least some of the essential transmembrane subunits of the mitochondrial respiratory chain. The mitoribosomes are attached to the mitochondrial inner membrane and translation products are cotranslationally integrated into the membrane. In Schizosaccharomyces pombe (strain 972 / ATCC 24843) (Fission yeast), this protein is Large ribosomal subunit protein uL11m.